A 422-amino-acid chain; its full sequence is Glutamate-1-semialdehyde 2,1-aminomutase (422 aa).

K258 carries the N6-(pyridoxal phosphate)lysine modification.

Belongs to the class-III pyridoxal-phosphate-dependent aminotransferase family. HemL subfamily. In terms of assembly, homodimer. Requires pyridoxal 5'-phosphate as cofactor.

It localises to the cytoplasm. The enzyme catalyses (S)-4-amino-5-oxopentanoate = 5-aminolevulinate. It functions in the pathway porphyrin-containing compound metabolism; protoporphyrin-IX biosynthesis; 5-aminolevulinate from L-glutamyl-tRNA(Glu): step 2/2. The polypeptide is Glutamate-1-semialdehyde 2,1-aminomutase (Chlamydia trachomatis serovar D (strain ATCC VR-885 / DSM 19411 / UW-3/Cx)).